The sequence spans 221 residues: Endonuclease V (221 aa).

2 residues coordinate Mg(2+): Asp38 and Asp104.

The protein belongs to the endonuclease V family. Mg(2+) is required as a cofactor.

The protein localises to the cytoplasm. It carries out the reaction Endonucleolytic cleavage at apurinic or apyrimidinic sites to products with a 5'-phosphate.. Its function is as follows. DNA repair enzyme involved in the repair of deaminated bases. Selectively cleaves double-stranded DNA at the second phosphodiester bond 3' to a deoxyinosine leaving behind the intact lesion on the nicked DNA. Recognizes only deoxyinosine. This chain is Endonuclease V, found in Archaeoglobus fulgidus (strain ATCC 49558 / DSM 4304 / JCM 9628 / NBRC 100126 / VC-16).